The following is a 687-amino-acid chain: Calcium-binding protein SP84 (687 aa).

The first 19 residues, 1-19 (MMRAIYLLVVVCWAAAANA), serve as a signal peptide directing secretion. EF-hand domains lie at 152–187 (LESD…HKNK), 257–292 (LTEI…TDDV), 406–441 (KTEA…PHMV), 476–511 (IENA…NNDA), and 579–614 (MTER…VKDL). Positions 592, 594, 596, 598, and 603 each coordinate Ca(2+).

As to expression, expressed in salivary glands where expression is strongest in type III cells in the posterior lobe of the principal glands (at protein level). Not expressed in midgut, Malpighian tubules or epidermis.

Its subcellular location is the secreted. In terms of biological role, binds calcium. During feeding of the phloem sap, protein is injected into sieve tubes of rice plants. This process may suppress the sieve-element clogging and facilitate continuous ingestion from sieve tubes. The protein is Calcium-binding protein SP84 of Nephotettix cincticeps (Green rice leafhopper).